The sequence spans 390 residues: Transforming growth factor beta-1 proprotein (390 aa).

The signal sequence occupies residues 1–29; it reads MPPSRLRLLPLLLPLLWLLVLAPGRPASG. Positions 30–74 are straightjacket domain; the sequence is LSTCKTIDMELVKRKRIEAIRGQILSKLRLASPPSQGDVPPGPLP. An arm domain region spans residues 75 to 271; it reads EAVLALYNST…ATPLERAQHL (197 aa). 3 N-linked (GlcNAc...) asparagine glycosylation sites follow: Asn82, Asn136, and Asn176. Residues 226–252 form a bowtie tail region; sequence DSKDNTLRVEINGIGPKRRGDLAAIHG. A Cell attachment site motif is present at residues 244–246; sequence RGD. 4 cysteine pairs are disulfide-bonded: Cys285/Cys294, Cys293/Cys356, Cys322/Cys387, and Cys326/Cys389.

It belongs to the TGF-beta family. Homodimer; disulfide-linked. Interacts with the serine proteases, HTRA1 and HTRA3: the interaction with either inhibits TGFB1-mediated signaling and the HTRA protease activity is required for this inhibition. May interact with THSD4; this interaction may lead to sequestration by FBN1 microfibril assembly and attenuation of TGFB signaling. Interacts with CD109, DPT and ASPN. Interacts with EFEMP2. Interacts with TSKU; the interaction contributes to regulation of the hair cycle. Interacts with TGFBR3. In terms of assembly, homodimer; disulfide-linked. Interacts with transforming growth factor beta-1 (TGF-beta-1) chain; interaction is non-covalent and maintains TGF-beta-1 in a latent state; each latency-associated peptide (LAP) monomer interacts with TGF-beta-1 in the other monomer. Interacts with LTBP1; leading to regulation of TGF-beta-1 activation. Interacts with LRRC32/GARP; leading to regulation of TGF-beta-1 activation on the surface of activated regulatory T-cells (Tregs). Interacts with LRRC33/NRROS; leading to regulation of TGF-beta-1 in macrophages and microglia. Interacts (via cell attachment site) with integrins ITGAV and ITGB6 (ITGAV:ITGB6), leading to release of the active TGF-beta-1. Interacts with NREP; the interaction results in a decrease in TGFB1 autoinduction. Interacts with HSP90AB1; inhibits latent TGFB1 activation. As to quaternary structure, homodimer; disulfide-linked. Interacts with TGF-beta receptors (TGFBR1 and TGFBR2), leading to signal transduction. Post-translationally, transforming growth factor beta-1 proprotein: The precursor proprotein is cleaved in the Golgi apparatus by FURIN to form Transforming growth factor beta-1 (TGF-beta-1) and Latency-associated peptide (LAP) chains, which remain non-covalently linked, rendering TGF-beta-1 inactive. N-glycosylated. Deglycosylation leads to activation of Transforming growth factor beta-1 (TGF-beta-1); mechanisms triggering deglycosylation-driven activation of TGF-beta-1 are however unclear.

The protein localises to the secreted. The protein resides in the extracellular space. Its subcellular location is the extracellular matrix. In terms of biological role, transforming growth factor beta-1 proprotein: Precursor of the Latency-associated peptide (LAP) and Transforming growth factor beta-1 (TGF-beta-1) chains, which constitute the regulatory and active subunit of TGF-beta-1, respectively. Its function is as follows. Required to maintain the Transforming growth factor beta-1 (TGF-beta-1) chain in a latent state during storage in extracellular matrix. Associates non-covalently with TGF-beta-1 and regulates its activation via interaction with 'milieu molecules', such as LTBP1, LRRC32/GARP and LRRC33/NRROS, that control activation of TGF-beta-1. Interaction with LRRC33/NRROS regulates activation of TGF-beta-1 in macrophages and microglia. Interaction with LRRC32/GARP controls activation of TGF-beta-1 on the surface of activated regulatory T-cells (Tregs). Interaction with integrins (ITGAV:ITGB6 or ITGAV:ITGB8) results in distortion of the Latency-associated peptide chain and subsequent release of the active TGF-beta-1. Functionally, multifunctional protein that regulates the growth and differentiation of various cell types and is involved in various processes, such as normal development, immune function, microglia function and responses to neurodegeneration. Activation into mature form follows different steps: following cleavage of the proprotein in the Golgi apparatus, Latency-associated peptide (LAP) and Transforming growth factor beta-1 (TGF-beta-1) chains remain non-covalently linked rendering TGF-beta-1 inactive during storage in extracellular matrix. At the same time, LAP chain interacts with 'milieu molecules', such as LTBP1, LRRC32/GARP and LRRC33/NRROS that control activation of TGF-beta-1 and maintain it in a latent state during storage in extracellular milieus. TGF-beta-1 is released from LAP by integrins (ITGAV:ITGB6 or ITGAV:ITGB8): integrin-binding to LAP stabilizes an alternative conformation of the LAP bowtie tail and results in distortion of the LAP chain and subsequent release of the active TGF-beta-1. Once activated following release of LAP, TGF-beta-1 acts by binding to TGF-beta receptors (TGFBR1 and TGFBR2), which transduce signal. While expressed by many cells types, TGF-beta-1 only has a very localized range of action within cell environment thanks to fine regulation of its activation by Latency-associated peptide chain (LAP) and 'milieu molecules'. Plays an important role in bone remodeling: acts as a potent stimulator of osteoblastic bone formation, causing chemotaxis, proliferation and differentiation in committed osteoblasts. Can promote either T-helper 17 cells (Th17) or regulatory T-cells (Treg) lineage differentiation in a concentration-dependent manner. At high concentrations, leads to FOXP3-mediated suppression of RORC and down-regulation of IL-17 expression, favoring Treg cell development. At low concentrations in concert with IL-6 and IL-21, leads to expression of the IL-17 and IL-23 receptors, favoring differentiation to Th17 cells. Stimulates sustained production of collagen through the activation of CREB3L1 by regulated intramembrane proteolysis (RIP). Mediates SMAD2/3 activation by inducing its phosphorylation and subsequent translocation to the nucleus. Positively regulates odontoblastic differentiation in dental papilla cells, via promotion of IPO7-mediated translocation of phosphorylated SMAD2 to the nucleus and subsequent transcription of target genes. Can induce epithelial-to-mesenchymal transition (EMT) and cell migration in various cell types. This chain is Transforming growth factor beta-1 proprotein (TGFB1), found in Cavia porcellus (Guinea pig).